A 182-amino-acid chain; its full sequence is Nuclear cap-binding protein subunit 2 (182 aa).

Residues Tyr13, Tyr35, 104–108 (RADLD), 115–119 (RQYGR), and 125–126 (QV) each bind mRNA. The RRM domain maps to 32-110 (NCVYVGNLSF…RIIRADLDHG (79 aa)). The interval 114–182 (GRQYGRGASG…NPRYNRWKKN (69 aa)) is disordered. The segment covering 126 to 136 (VRDEMREEFDP) has biased composition (basic and acidic residues). Positions 145-175 (RQPTSSRQLANYSGISSAPLGSSLELQSNPR) are enriched in polar residues.

It belongs to the RRM NCBP2 family. As to quaternary structure, component of the nuclear cap-binding complex (CBC), a heterodimer composed of cbc1 and cbc2 that interacts with capped RNAs.

It localises to the cytoplasm. The protein localises to the perinuclear region. Its subcellular location is the nucleus. In terms of biological role, component of the CBC complex, which binds co-transcriptionally to the 5' cap of pre-mRNAs and is involved in maturation, export and degradation of nuclear mRNAs. This Schizosaccharomyces pombe (strain 972 / ATCC 24843) (Fission yeast) protein is Nuclear cap-binding protein subunit 2 (cbc2).